Here is a 379-residue protein sequence, read N- to C-terminus: Succinyl-diaminopimelate desuccinylase (379 aa).

His-70 lines the Zn(2+) pocket. Asp-72 is an active-site residue. Asp-103 contacts Zn(2+). Glu-137 serves as the catalytic Proton acceptor. Residues Glu-138, Glu-166, and His-352 each contribute to the Zn(2+) site.

It belongs to the peptidase M20A family. DapE subfamily. Homodimer. Zn(2+) serves as cofactor. It depends on Co(2+) as a cofactor.

It catalyses the reaction N-succinyl-(2S,6S)-2,6-diaminopimelate + H2O = (2S,6S)-2,6-diaminopimelate + succinate. It participates in amino-acid biosynthesis; L-lysine biosynthesis via DAP pathway; LL-2,6-diaminopimelate from (S)-tetrahydrodipicolinate (succinylase route): step 3/3. Catalyzes the hydrolysis of N-succinyl-L,L-diaminopimelic acid (SDAP), forming succinate and LL-2,6-diaminopimelate (DAP), an intermediate involved in the bacterial biosynthesis of lysine and meso-diaminopimelic acid, an essential component of bacterial cell walls. This is Succinyl-diaminopimelate desuccinylase from Burkholderia cenocepacia (strain HI2424).